Consider the following 470-residue polypeptide: Diaminobutyrate--2-oxoglutarate aminotransferase (470 aa).

K304 carries the post-translational modification N6-(pyridoxal phosphate)lysine.

Belongs to the class-III pyridoxal-phosphate-dependent aminotransferase family. Pyridoxal 5'-phosphate is required as a cofactor.

It catalyses the reaction L-2,4-diaminobutanoate + 2-oxoglutarate = L-aspartate 4-semialdehyde + L-glutamate. It functions in the pathway siderophore biosynthesis; rhizobactin biosynthesis. This Rhizobium meliloti (strain 1021) (Ensifer meliloti) protein is Diaminobutyrate--2-oxoglutarate aminotransferase (rhbA).